The chain runs to 52 residues: ATP synthase protein 8 (52 aa).

A helical membrane pass occupies residues 6 to 26 (PINGFVILCSISLMLLTLLIN).

Belongs to the ATPase protein 8 family. F-type ATPases have 2 components, CF(1) - the catalytic core - and CF(0) - the membrane proton channel.

It localises to the mitochondrion membrane. Mitochondrial membrane ATP synthase (F(1)F(0) ATP synthase or Complex V) produces ATP from ADP in the presence of a proton gradient across the membrane which is generated by electron transport complexes of the respiratory chain. F-type ATPases consist of two structural domains, F(1) - containing the extramembraneous catalytic core and F(0) - containing the membrane proton channel, linked together by a central stalk and a peripheral stalk. During catalysis, ATP synthesis in the catalytic domain of F(1) is coupled via a rotary mechanism of the central stalk subunits to proton translocation. Part of the complex F(0) domain. Minor subunit located with subunit a in the membrane. The protein is ATP synthase protein 8 (MT-ATP8) of Albinaria turrita (Door snail).